The primary structure comprises 456 residues: tRNA-2-methylthio-N(6)-dimethylallyladenosine synthase (456 aa).

The MTTase N-terminal domain occupies 6-123; the sequence is KHVYIETYGC…LPNLIEEAQR (118 aa). [4Fe-4S] cluster-binding residues include C15, C52, C86, C160, C164, and C167. One can recognise a Radical SAM core domain in the interval 146 to 380; sequence RAEGPTAYVS…RILEMAASIS (235 aa). The region spanning 381–444 is the TRAM domain; sequence EAMVGTEQWV…KNSLRGRLIE (64 aa).

It belongs to the methylthiotransferase family. MiaB subfamily. In terms of assembly, monomer. The cofactor is [4Fe-4S] cluster.

The protein resides in the cytoplasm. It carries out the reaction N(6)-dimethylallyladenosine(37) in tRNA + (sulfur carrier)-SH + AH2 + 2 S-adenosyl-L-methionine = 2-methylsulfanyl-N(6)-dimethylallyladenosine(37) in tRNA + (sulfur carrier)-H + 5'-deoxyadenosine + L-methionine + A + S-adenosyl-L-homocysteine + 2 H(+). Catalyzes the methylthiolation of N6-(dimethylallyl)adenosine (i(6)A), leading to the formation of 2-methylthio-N6-(dimethylallyl)adenosine (ms(2)i(6)A) at position 37 in tRNAs that read codons beginning with uridine. The sequence is that of tRNA-2-methylthio-N(6)-dimethylallyladenosine synthase from Dichelobacter nodosus (strain VCS1703A).